A 352-amino-acid chain; its full sequence is Phosphatase Herzog (352 aa).

The prion-like domain necessary for both protein assembly and membrane targeting stretch occupies residues 1 to 102 (MDATSIITQV…PLPDQQRYLL (102 aa)). Residues 103–267 (PQVRLTDMHR…ELIPLFEKLS (165 aa)) form a mediates substrate recognition region. The 159-residue stretch at 108–266 (TDMHRKCMVI…RELIPLFEKL (159 aa)) folds into the FCP1 homology domain. 2 disordered regions span residues 284 to 310 (NNQT…LQQQ) and 332 to 352 (TMLN…LQKT).

In terms of assembly, monomer. Forms higher-order protein aggregates with amyloid-like features during gastrulation. Interacts with babo, dah, Irk1, pch2, Ras64B, sax and Src64B.

It is found in the cell membrane. The catalysed reaction is O-phospho-L-seryl-[protein] + H2O = L-seryl-[protein] + phosphate. Phosphatase activity requires amyloid-like aggregation on the membrane. Prion-like membrane-associated phosphatase. Phosphatase activity depends on amyloid-like assembly at the membrane. Might have a role in establishment of segment polarity in embryos. The chain is Phosphatase Herzog from Drosophila melanogaster (Fruit fly).